Reading from the N-terminus, the 432-residue chain is Amino-acid acetyltransferase (432 aa).

The N-acetyltransferase domain occupies 286–425 (EVVREASIED…ASLYNYQRNS (140 aa)).

This sequence belongs to the acetyltransferase family. ArgA subfamily.

The protein resides in the cytoplasm. It catalyses the reaction L-glutamate + acetyl-CoA = N-acetyl-L-glutamate + CoA + H(+). Its pathway is amino-acid biosynthesis; L-arginine biosynthesis; N(2)-acetyl-L-ornithine from L-glutamate: step 1/4. The sequence is that of Amino-acid acetyltransferase from Pseudomonas putida (strain GB-1).